The primary structure comprises 112 residues: DNA-binding protein TSIB_0525 (112 aa).

Belongs to the PDCD5 family.

The chain is DNA-binding protein TSIB_0525 from Thermococcus sibiricus (strain DSM 12597 / MM 739).